A 123-amino-acid chain; its full sequence is Defensin beta 118 (123 aa).

Residues 1 to 19 (MKLLLLALPVLVLLPQVIP) form the signal peptide. 3 disulfide bridges follow: C27-C54, C34-C48, and C38-C55. Residues 65 to 123 (VPMTSPTPLSDSTPGIIDDILTVRFTTDYFEVSSKKDMVEESEAGRGTETSLPNVHHSS) constitute a propeptide that is removed on maturation. Positions 100–110 (KDMVEESEAGR) are enriched in basic and acidic residues. The disordered stretch occupies residues 100–123 (KDMVEESEAGRGTETSLPNVHHSS). Positions 112 to 123 (TETSLPNVHHSS) are enriched in polar residues.

It belongs to the beta-defensin family. In terms of processing, the three-dimensional structure formed by the three intramolecular disulfide bridges is indispensable for antimicrobial activity.

It is found in the secreted. Functionally, host defense peptide that exhibits antimicrobial activity against both Gram-negative bacteria, such as E.coli and S.typhimurium, and Gram-positive bacteria, such as S.aureus and B.subtilis. Inhibits cell adhesion of E.coli on intestinal epithelial enterocytes. Causes rapid permeabilization of both the outer and inner membrane of E.coli, leading to morphological alterations on the bacterial surface. Binds to bacterial lipopolysaccharides (LPS) with high affinity, and may thereby be involved in immunoregulation through LPS neutralization. May contribute to epididymal innate immunity and protect the sperm against attack by microorganisms. The sequence is that of Defensin beta 118 (DEFB118) from Pan troglodytes (Chimpanzee).